The primary structure comprises 222 residues: Phosphoglycolate phosphatase (222 aa).

The active-site Nucleophile is the D8. 2 residues coordinate Mg(2+): D8 and D10. K146 provides a ligand contact to substrate. Positions 169 and 173 each coordinate Mg(2+).

The protein belongs to the archaeal SPP-like hydrolase family. The cofactor is Mg(2+).

It carries out the reaction 2-phosphoglycolate + H2O = glycolate + phosphate. In terms of biological role, catalyzes the dephosphorylation of 2-phosphoglycolate. The chain is Phosphoglycolate phosphatase from Methanothrix thermoacetophila (strain DSM 6194 / JCM 14653 / NBRC 101360 / PT) (Methanosaeta thermophila).